Reading from the N-terminus, the 427-residue chain is Enolase (427 aa).

Gln-162 contacts (2R)-2-phosphoglycerate. Catalysis depends on Glu-206, which acts as the Proton donor. Asp-243, Glu-286, and Asp-313 together coordinate Mg(2+). Residues Lys-338, Arg-367, Ser-368, and Lys-389 each coordinate (2R)-2-phosphoglycerate. The active-site Proton acceptor is the Lys-338.

This sequence belongs to the enolase family. The cofactor is Mg(2+).

Its subcellular location is the cytoplasm. The protein localises to the secreted. It is found in the cell surface. The enzyme catalyses (2R)-2-phosphoglycerate = phosphoenolpyruvate + H2O. The protein operates within carbohydrate degradation; glycolysis; pyruvate from D-glyceraldehyde 3-phosphate: step 4/5. Catalyzes the reversible conversion of 2-phosphoglycerate (2-PG) into phosphoenolpyruvate (PEP). It is essential for the degradation of carbohydrates via glycolysis. This Methanopyrus kandleri (strain AV19 / DSM 6324 / JCM 9639 / NBRC 100938) protein is Enolase.